The chain runs to 207 residues: Outer-membrane lipoprotein LolB (207 aa).

Residues 1–21 form the signal peptide; sequence MPMRKRHFYRLLPLASLLLAA. Cysteine 22 carries N-palmitoyl cysteine lipidation. Cysteine 22 is lipidated: S-diacylglycerol cysteine.

It belongs to the LolB family. In terms of assembly, monomer.

The protein localises to the cell outer membrane. Its function is as follows. Plays a critical role in the incorporation of lipoproteins in the outer membrane after they are released by the LolA protein. The protein is Outer-membrane lipoprotein LolB of Yersinia pseudotuberculosis serotype O:3 (strain YPIII).